The chain runs to 267 residues: Hydroxynaphthalene reductase-like protein Arp2 (267 aa).

The NADP(+) site is built by isoleucine 25, asparagine 45, aspartate 71, and asparagine 98. Residues serine 147 and serine 148 each act as proton donor in the active site. Positions 162, 166, 195, and 197 each coordinate NADP(+). The active-site Proton acceptor is tyrosine 162. Catalysis depends on lysine 166, which acts as the Lowers pKa of active site Tyr.

Belongs to the short-chain dehydrogenases/reductases (SDR) family.

In terms of biological role, hydroxynaphthalene reductase-like protein; part of the Pks2 gene cluster that mediates the formation of infectious structures (appressoria), enabling these fungi to kill insects faster. The product of the Pks2 gene cluster is different from the one of Pks1 and has still not been identified. The protein is Hydroxynaphthalene reductase-like protein Arp2 of Metarhizium acridum (strain CQMa 102).